The chain runs to 59 residues: uncharacterized protein (59 aa).

This is an uncharacterized protein from Acidianus convivator (ATV).